The primary structure comprises 201 residues: uncharacterized protein (201 aa).

Belongs to the methyltransferase superfamily.

This is an uncharacterized protein from Bacillus subtilis (strain 168).